Here is a 417-residue protein sequence, read N- to C-terminus: Metal-binding activator 1 (417 aa).

The segment at residues 1–40 is a DNA-binding region (copper-fist); that stretch reads MIIFNGNKYACASCIRGHRSSTCRHSHRMLIKVRTRGRPS. The Zn(2+) site is built by Cys-11, Cys-14, Cys-23, and His-25. 2 disordered regions span residues 128–198 and 216–242; these read FLRK…IFTP and YNSS…AAPH. Ser-143 bears the Phosphoserine mark. The span at 153-178 shows a compositional bias: basic and acidic residues; that stretch reads SEKKERSRLQQEPIRHFSNCCKKDKS. 2 stretches are compositionally biased toward polar residues: residues 179–190 and 228–238; these read QNPASNGKTNKA and ETLTPQSTTTI. 2 consecutive repeat copies span residues 264–279 and 322–337. Residues 264–337 form a 2 X 16 AA repeat of C-X-C-X(4)-C-X-C-X-X-C-X-X-H region; sequence CSCEDESCPC…NCTCDGCFSH (74 aa).

It localises to the nucleus. Its function is as follows. Regulatory protein involved in Cu/Fe utilization and stress resistance. Involved in basal level transcription of FRE1 and H(2)O(2)-induced transcription of CTT1. Regulates the transcription of CTR1 and CTR3 via the copper ion responsive elements in their promoters. Required for degradation of CTR1. The protein is Metal-binding activator 1 (MAC1) of Saccharomyces cerevisiae (strain ATCC 204508 / S288c) (Baker's yeast).